The sequence spans 82 residues: Sec-independent protein translocase protein TatA (82 aa).

The chain crosses the membrane as a helical span at residues 2 to 22; sequence GFGGISLWQLLIVLAIIVLLF. The interval 43–82 is disordered; it reads KAMSDEKNTDKEKPEQIQKSEESAPLDSAHTEKNKDNNKV. Basic and acidic residues-rich tracts occupy residues 44–64 and 71–82; these read AMSDEKNTDKEKPEQIQKSEE and AHTEKNKDNNKV.

It belongs to the TatA/E family. As to quaternary structure, the Tat system comprises two distinct complexes: a TatABC complex, containing multiple copies of TatA, TatB and TatC subunits, and a separate TatA complex, containing only TatA subunits. Substrates initially bind to the TatABC complex, which probably triggers association of the separate TatA complex to form the active translocon.

It localises to the cell inner membrane. Its function is as follows. Part of the twin-arginine translocation (Tat) system that transports large folded proteins containing a characteristic twin-arginine motif in their signal peptide across membranes. TatA could form the protein-conducting channel of the Tat system. The protein is Sec-independent protein translocase protein TatA of Pseudoalteromonas translucida (strain TAC 125).